We begin with the raw amino-acid sequence, 272 residues long: Elongation factor Ts (272 aa).

The interval 76–79 (TDFV) is involved in Mg(2+) ion dislocation from EF-Tu.

This sequence belongs to the EF-Ts family.

It is found in the cytoplasm. In terms of biological role, associates with the EF-Tu.GDP complex and induces the exchange of GDP to GTP. It remains bound to the aminoacyl-tRNA.EF-Tu.GTP complex up to the GTP hydrolysis stage on the ribosome. This is Elongation factor Ts from Corynebacterium urealyticum (strain ATCC 43042 / DSM 7109).